Here is an 86-residue protein sequence, read N- to C-terminus: Small ribosomal subunit protein uS15c (86 aa).

The protein belongs to the universal ribosomal protein uS15 family. Part of the 30S ribosomal subunit.

It localises to the plastid. This chain is Small ribosomal subunit protein uS15c (rps15), found in Cuscuta gronovii (Common dodder).